Reading from the N-terminus, the 312-residue chain is Methionyl-tRNA formyltransferase (312 aa).

Position 112–115 (112–115) interacts with (6S)-5,6,7,8-tetrahydrofolate; that stretch reads SLLP.

Belongs to the Fmt family.

The enzyme catalyses L-methionyl-tRNA(fMet) + (6R)-10-formyltetrahydrofolate = N-formyl-L-methionyl-tRNA(fMet) + (6S)-5,6,7,8-tetrahydrofolate + H(+). In terms of biological role, attaches a formyl group to the free amino group of methionyl-tRNA(fMet). The formyl group appears to play a dual role in the initiator identity of N-formylmethionyl-tRNA by promoting its recognition by IF2 and preventing the misappropriation of this tRNA by the elongation apparatus. This Magnetococcus marinus (strain ATCC BAA-1437 / JCM 17883 / MC-1) protein is Methionyl-tRNA formyltransferase.